Reading from the N-terminus, the 444-residue chain is ATP-dependent protease ATPase subunit HslU (444 aa).

ATP is bound by residues isoleucine 18, 60–65, aspartate 256, glutamate 322, and arginine 394; that span reads GVGKTE.

This sequence belongs to the ClpX chaperone family. HslU subfamily. In terms of assembly, a double ring-shaped homohexamer of HslV is capped on each side by a ring-shaped HslU homohexamer. The assembly of the HslU/HslV complex is dependent on binding of ATP.

It is found in the cytoplasm. ATPase subunit of a proteasome-like degradation complex; this subunit has chaperone activity. The binding of ATP and its subsequent hydrolysis by HslU are essential for unfolding of protein substrates subsequently hydrolyzed by HslV. HslU recognizes the N-terminal part of its protein substrates and unfolds these before they are guided to HslV for hydrolysis. This Serratia proteamaculans (strain 568) protein is ATP-dependent protease ATPase subunit HslU.